Here is a 159-residue protein sequence, read N- to C-terminus: Transcription elongation factor GreA (159 aa).

It belongs to the GreA/GreB family.

Necessary for efficient RNA polymerase transcription elongation past template-encoded arresting sites. The arresting sites in DNA have the property of trapping a certain fraction of elongating RNA polymerases that pass through, resulting in locked ternary complexes. Cleavage of the nascent transcript by cleavage factors such as GreA or GreB allows the resumption of elongation from the new 3'terminus. GreA releases sequences of 2 to 3 nucleotides. This chain is Transcription elongation factor GreA, found in Buchnera aphidicola subsp. Baizongia pistaciae (strain Bp).